The chain runs to 107 residues: MLSKGRSPRRKQVQTQRKAALVLSVTPMVPVGSVWLAMSSVLSAFMRELPGWFLFFGVFLPVTLLLLLLIAYFRIKLIEVNEELSQNCDRQHNPKDGSSLYQRMKWT.

The next 2 membrane-spanning stretches (helical) occupy residues 19-39 (AALV…LAMS) and 53-73 (FLFF…IAYF). The interval 85–107 (SQNCDRQHNPKDGSSLYQRMKWT) is disordered.

It localises to the membrane. The polypeptide is Small leucine-rich protein 1 (SMLR1) (Homo sapiens (Human)).